The primary structure comprises 460 residues: uncharacterized protein (460 aa).

A signal peptide (tat-type signal) is located at residues 1-33 (MKESNSRREFLSQSGKMVTAAALFGTSVPLAHA).

This sequence belongs to the metallo-dependent hydrolases superfamily. Exported by the Tat system. The position of the signal peptide cleavage has not been experimentally proven. Can also be exported by the Sec system.

This is an uncharacterized protein from Escherichia coli (strain K12).